The chain runs to 200 residues: Phospholipase A2 inhibitor gamma subunit B (200 aa).

An N-terminal signal peptide occupies residues 1–19; that stretch reads MKSFLFCCLLGTFLAIGMC. Disulfide bonds link C22–C46, C25–C32, C39–C67, C73–C94, C95–C100, C120–C145, C138–C165, and C171–C191. N33 carries N-linked (GlcNAc...) asparagine glycosylation.

Belongs to the CNF-like-inhibitor family. Heterodimer of subunit A and subunit B. As to expression, expressed by the liver.

It is found in the secreted. Its function is as follows. Inhibits the enzymatic activity of phospholipase A2 (PA2). This chain is Phospholipase A2 inhibitor gamma subunit B, found in Gloydius brevicaudus siniticus (Chinese mamushi).